The following is a 226-amino-acid chain: ATP synthase F(0) complex subunit a (226 aa).

The next 6 helical transmembrane spans lie at 12 to 32, 68 to 88, 97 to 117, 138 to 158, 164 to 184, and 200 to 222; these read PTMM…ILFP, WALM…LGLL, QLSM…ITGF, IPML…ALAV, ITAG…LMNI, and TILE…SLYL.

This sequence belongs to the ATPase A chain family. In terms of assembly, component of the ATP synthase complex composed at least of ATP5F1A/subunit alpha, ATP5F1B/subunit beta, ATP5MC1/subunit c (homooctomer), MT-ATP6/subunit a, MT-ATP8/subunit 8, ATP5ME/subunit e, ATP5MF/subunit f, ATP5MG/subunit g, ATP5MK/subunit k, ATP5MJ/subunit j, ATP5F1C/subunit gamma, ATP5F1D/subunit delta, ATP5F1E/subunit epsilon, ATP5PF/subunit F6, ATP5PB/subunit b, ATP5PD/subunit d, ATP5PO/subunit OSCP. ATP synthase complex consists of a soluble F(1) head domain (subunits alpha(3) and beta(3)) - the catalytic core - and a membrane F(0) domain - the membrane proton channel (subunits c, a, 8, e, f, g, k and j). These two domains are linked by a central stalk (subunits gamma, delta, and epsilon) rotating inside the F1 region and a stationary peripheral stalk (subunits F6, b, d, and OSCP). Interacts with DNAJC30; interaction is direct.

The protein resides in the mitochondrion inner membrane. It catalyses the reaction H(+)(in) = H(+)(out). Functionally, subunit a, of the mitochondrial membrane ATP synthase complex (F(1)F(0) ATP synthase or Complex V) that produces ATP from ADP in the presence of a proton gradient across the membrane which is generated by electron transport complexes of the respiratory chain. ATP synthase complex consist of a soluble F(1) head domain - the catalytic core - and a membrane F(1) domain - the membrane proton channel. These two domains are linked by a central stalk rotating inside the F(1) region and a stationary peripheral stalk. During catalysis, ATP synthesis in the catalytic domain of F(1) is coupled via a rotary mechanism of the central stalk subunits to proton translocation. With the subunit c (ATP5MC1), forms the proton-conducting channel in the F(0) domain, that contains two crucial half-channels (inlet and outlet) that facilitate proton movement from the mitochondrial intermembrane space (IMS) into the matrix. Protons are taken up via the inlet half-channel and released through the outlet half-channel, following a Grotthuss mechanism. The protein is ATP synthase F(0) complex subunit a of Felis catus (Cat).